The sequence spans 513 residues: GTPase Obg (513 aa).

The 158-residue stretch at 3 to 160 (THFVDRVVVH…LDLHLEVKTL (158 aa)) folds into the Obg domain. The 177-residue stretch at 161–337 (ADVALVGFPS…LSFAMAELVS (177 aa)) folds into the OBG-type G domain. GTP-binding positions include 167-174 (GFPSAGKS), 192-196 (FTTLV), 213-216 (DVPG), 289-292 (NKAD), and 318-320 (SAV). Positions 174 and 194 each coordinate Mg(2+). An OCT domain is found at 355–444 (PRAVDDQGFK…ANAVVFDWEP (90 aa)). The segment at 457 to 513 (GSDLRLEDHSRPTRDEKRLQERERRAAKVTARDELEAERRAGHWTAADEADEELSQR) is disordered. Residues 458–497 (SDLRLEDHSRPTRDEKRLQERERRAAKVTARDELEAERRA) show a composition bias toward basic and acidic residues. Residues 504–513 (DEADEELSQR) are compositionally biased toward acidic residues.

Belongs to the TRAFAC class OBG-HflX-like GTPase superfamily. OBG GTPase family. As to quaternary structure, monomer. Mg(2+) serves as cofactor.

It is found in the cytoplasm. Functionally, an essential GTPase which binds GTP, GDP and possibly (p)ppGpp with moderate affinity, with high nucleotide exchange rates and a fairly low GTP hydrolysis rate. Plays a role in control of the cell cycle, stress response, ribosome biogenesis and in those bacteria that undergo differentiation, in morphogenesis control. In Kineococcus radiotolerans (strain ATCC BAA-149 / DSM 14245 / SRS30216), this protein is GTPase Obg.